The chain runs to 324 residues: Putative 12-oxophytodienoate reductase-like protein 1 (324 aa).

N-acetylmethionine is present on methionine 1. FMN is bound by residues 14-16, alanine 47, and glutamine 89; that span reads PMA. Residues 99-113 are compositionally biased toward polar residues; the sequence is QDCQPNGESPVSSTD. The tract at residues 99–128 is disordered; that stretch reads QDCQPNGESPVSSTDKPFADDPSNEFTPPR. Residue 160-163 coordinates substrate; the sequence is HGAH. Tyrosine 165 serves as the catalytic Proton donor. Residue arginine 212 coordinates FMN. A substrate-binding site is contributed by arginine 252. FMN-binding positions include glycine 282 and 303–304; that span reads GR.

The protein belongs to the NADH:flavin oxidoreductase/NADH oxidase family. Requires FMN as cofactor.

Its function is as follows. Putative oxophytodienoate reductase that may be involved in the biosynthesis or metabolism of oxylipin signaling molecules. In Arabidopsis thaliana (Mouse-ear cress), this protein is Putative 12-oxophytodienoate reductase-like protein 1.